The chain runs to 334 residues: Protein SCO1 homolog 1, mitochondrial (334 aa).

Residues 1-13 constitute a mitochondrion transit peptide; the sequence is MASALCRTASRLR. Residues 74-120 are disordered; it reads SASDTTSKHDSGKPETKSSEKNEKSGGSESSDGGSDHKNERASGKDV. Basic and acidic residues-rich tracts occupy residues 79-99 and 107-120; these read TSKH…EKSG and GSDH…GKDV. A helical membrane pass occupies residues 125-144; sequence VSWMSFFLLFATGAGLVYYY. Residues 166 to 331 form the Thioredoxin domain; that stretch reads PSAGKAAIGG…TDGVVKEIRQ (166 aa). Residues C206, C210, and H295 each coordinate Cu cation.

The protein belongs to the SCO1/2 family. In terms of tissue distribution, expressed in the whole plant with highest expression in imbibed seeds, embryos, endosperm, and root tips.

It is found in the mitochondrion inner membrane. Functionally, thought to play a role in cellular copper homeostasis, mitochondrial redox signaling or insertion of copper into the active site of COX. Plays an essential role in embryo development. In Arabidopsis thaliana (Mouse-ear cress), this protein is Protein SCO1 homolog 1, mitochondrial (HCC1).